Consider the following 67-residue polypeptide: Small ribosomal subunit protein bS21 (67 aa).

The protein belongs to the bacterial ribosomal protein bS21 family.

This chain is Small ribosomal subunit protein bS21, found in Nitratidesulfovibrio vulgaris (strain DP4) (Desulfovibrio vulgaris).